A 76-amino-acid chain; its full sequence is Putative UPF0377 protein YGL260W (76 aa).

Belongs to the UPF0377 family.

In Saccharomyces cerevisiae (strain ATCC 204508 / S288c) (Baker's yeast), this protein is Putative UPF0377 protein YGL260W.